Reading from the N-terminus, the 423-residue chain is Serine--tRNA ligase (423 aa).

Residue 231 to 233 coordinates L-serine; that stretch reads TAE. Residue 262–264 coordinates ATP; the sequence is RSE. Residue E285 coordinates L-serine. 349–352 provides a ligand contact to ATP; the sequence is EISS. S384 lines the L-serine pocket.

The protein belongs to the class-II aminoacyl-tRNA synthetase family. Type-1 seryl-tRNA synthetase subfamily. As to quaternary structure, homodimer. The tRNA molecule binds across the dimer.

It localises to the cytoplasm. It catalyses the reaction tRNA(Ser) + L-serine + ATP = L-seryl-tRNA(Ser) + AMP + diphosphate + H(+). It carries out the reaction tRNA(Sec) + L-serine + ATP = L-seryl-tRNA(Sec) + AMP + diphosphate + H(+). Its pathway is aminoacyl-tRNA biosynthesis; selenocysteinyl-tRNA(Sec) biosynthesis; L-seryl-tRNA(Sec) from L-serine and tRNA(Sec): step 1/1. Catalyzes the attachment of serine to tRNA(Ser). Is also able to aminoacylate tRNA(Sec) with serine, to form the misacylated tRNA L-seryl-tRNA(Sec), which will be further converted into selenocysteinyl-tRNA(Sec). The sequence is that of Serine--tRNA ligase from Lactococcus lactis subsp. cremoris (strain MG1363).